A 151-amino-acid chain; its full sequence is Small ribosomal subunit protein uS15 (151 aa).

N6-acetyllysine; alternate is present on Lys-27. Lys-27 bears the N6-succinyllysine; alternate mark. A Glycyl lysine isopeptide (Lys-Gly) (interchain with G-Cter in ubiquitin) cross-link involves residue Lys-27. A Phosphoserine modification is found at Ser-30. Position 34 is an N6-succinyllysine (Lys-34). Tyr-38 carries the phosphotyrosine modification. A Glycyl lysine isopeptide (Lys-Gly) (interchain with G-Cter in SUMO2) cross-link involves residue Lys-43.

It belongs to the universal ribosomal protein uS15 family. As to quaternary structure, component of the small ribosomal subunit. Part of the small subunit (SSU) processome, composed of more than 70 proteins and the RNA chaperone small nucleolar RNA (snoRNA) U3. In terms of processing, ubiquitinated at Lys-27 by RNF14 and RNF25 in response to ribosome collisions (ribosome stalling).

The protein localises to the cytoplasm. The protein resides in the nucleus. It localises to the nucleolus. Its function is as follows. Component of the small ribosomal subunit. The ribosome is a large ribonucleoprotein complex responsible for the synthesis of proteins in the cell. Part of the small subunit (SSU) processome, first precursor of the small eukaryotic ribosomal subunit. During the assembly of the SSU processome in the nucleolus, many ribosome biogenesis factors, an RNA chaperone and ribosomal proteins associate with the nascent pre-rRNA and work in concert to generate RNA folding, modifications, rearrangements and cleavage as well as targeted degradation of pre-ribosomal RNA by the RNA exosome. In Homo sapiens (Human), this protein is Small ribosomal subunit protein uS15.